The following is a 447-amino-acid chain: Tubulin beta-2 chain (447 aa).

Residues Gln11, Glu69, Ser138, Gly142, Thr143, Gly144, Asn204, and Asn226 each contribute to the GTP site. Glu69 lines the Mg(2+) pocket. Residues 427–447 (DASISEGEEEYEEEQQLENEE) are disordered. Residues 432 to 447 (EGEEEYEEEQQLENEE) are compositionally biased toward acidic residues.

The protein belongs to the tubulin family. In terms of assembly, dimer of alpha and beta chains. A typical microtubule is a hollow water-filled tube with an outer diameter of 25 nm and an inner diameter of 15 nM. Alpha-beta heterodimers associate head-to-tail to form protofilaments running lengthwise along the microtubule wall with the beta-tubulin subunit facing the microtubule plus end conferring a structural polarity. Microtubules usually have 13 protofilaments but different protofilament numbers can be found in some organisms and specialized cells. Requires Mg(2+) as cofactor.

Its subcellular location is the cytoplasm. The protein localises to the cytoskeleton. Tubulin is the major constituent of microtubules, a cylinder consisting of laterally associated linear protofilaments composed of alpha- and beta-tubulin heterodimers. Microtubules grow by the addition of GTP-tubulin dimers to the microtubule end, where a stabilizing cap forms. Below the cap, tubulin dimers are in GDP-bound state, owing to GTPase activity of alpha-tubulin. The polypeptide is Tubulin beta-2 chain (TUB2) (Erysiphe pisi (Pea powdery mildew)).